Reading from the N-terminus, the 38-residue chain is Trypsin inhibitor 2 (38 aa).

Pyrrolidone carboxylic acid is present on Q1.

In terms of processing, contains disulfide bonds.

Functionally, inhibits trypsin-like proteases from the guts of the insect pests P.truncatus, P.americana, Acheta sp and Gryllus sp. This is Trypsin inhibitor 2 from Opuntia streptacantha (Prickly pear cactus).